The primary structure comprises 399 residues: Succinate--CoA ligase [ADP-forming] subunit beta (399 aa).

The region spanning 9–254 (KAVLKSFGAP…TTEEDEKEIE (246 aa)) is the ATP-grasp domain. Residues K46, 53-55 (GRG), E109, A112, and E117 contribute to the ATP site. Residues N209 and D223 each contribute to the Mg(2+) site. Residues N274 and 331–333 (GIM) each bind substrate.

The protein belongs to the succinate/malate CoA ligase beta subunit family. In terms of assembly, heterotetramer of two alpha and two beta subunits. Mg(2+) serves as cofactor.

The catalysed reaction is succinate + ATP + CoA = succinyl-CoA + ADP + phosphate. It carries out the reaction GTP + succinate + CoA = succinyl-CoA + GDP + phosphate. It functions in the pathway carbohydrate metabolism; tricarboxylic acid cycle; succinate from succinyl-CoA (ligase route): step 1/1. In terms of biological role, succinyl-CoA synthetase functions in the citric acid cycle (TCA), coupling the hydrolysis of succinyl-CoA to the synthesis of either ATP or GTP and thus represents the only step of substrate-level phosphorylation in the TCA. The beta subunit provides nucleotide specificity of the enzyme and binds the substrate succinate, while the binding sites for coenzyme A and phosphate are found in the alpha subunit. The polypeptide is Succinate--CoA ligase [ADP-forming] subunit beta (Maricaulis maris (strain MCS10) (Caulobacter maris)).